Consider the following 490-residue polypeptide: Bifunctional protein HldE (490 aa).

Residues 1-330 form a ribokinase region; sequence MLDFEQLSPA…RKILPHAFLA (330 aa). Residue 205–208 coordinates ATP; it reads NRKE. Asp-275 is a catalytic residue. The cytidylyltransferase stretch occupies residues 358 to 490; the sequence is FTNGCFDILH…LVARAQNGKS (133 aa).

It in the N-terminal section; belongs to the carbohydrate kinase PfkB family. The protein in the C-terminal section; belongs to the cytidylyltransferase family. In terms of assembly, homodimer.

It catalyses the reaction D-glycero-beta-D-manno-heptose 7-phosphate + ATP = D-glycero-beta-D-manno-heptose 1,7-bisphosphate + ADP + H(+). The catalysed reaction is D-glycero-beta-D-manno-heptose 1-phosphate + ATP + H(+) = ADP-D-glycero-beta-D-manno-heptose + diphosphate. It functions in the pathway nucleotide-sugar biosynthesis; ADP-L-glycero-beta-D-manno-heptose biosynthesis; ADP-L-glycero-beta-D-manno-heptose from D-glycero-beta-D-manno-heptose 7-phosphate: step 1/4. The protein operates within nucleotide-sugar biosynthesis; ADP-L-glycero-beta-D-manno-heptose biosynthesis; ADP-L-glycero-beta-D-manno-heptose from D-glycero-beta-D-manno-heptose 7-phosphate: step 3/4. In terms of biological role, catalyzes the phosphorylation of D-glycero-D-manno-heptose 7-phosphate at the C-1 position to selectively form D-glycero-beta-D-manno-heptose-1,7-bisphosphate. Catalyzes the ADP transfer from ATP to D-glycero-beta-D-manno-heptose 1-phosphate, yielding ADP-D-glycero-beta-D-manno-heptose. The sequence is that of Bifunctional protein HldE from Rhodopseudomonas palustris (strain BisA53).